The following is a 448-amino-acid chain: FAD-dependent monooxygenase srdH (448 aa).

Positions 32 and 107 each coordinate FAD. The active site involves glutamine 227. Aspartate 313 is an FAD binding site.

Belongs to the paxM FAD-dependent monooxygenase family. The cofactor is FAD.

Functionally, highly reducing polyketide synthase; part of the gene cluster that mediates the biosynthesis of sordarial, a salicylic aldehyde structurally related to the phytotoxin pyriculol. The most interesting aspect of this pathway is formation of an aromatic product from the highly reducing polyketide synthase srdA. SrdA synthesizes a reduced polyketide chain from one molecule of acetyl-CoA and five molecules of malonyl-CoA. The polyketide chain is then reductively released as an aldehyde. The oxidoreductases srdC, srdD and srdE then oxidize one of the hydroxy groups to facilitate the intramolecular aldol condensation, followed by dehydration to yield a salicylic aldehyde. This aldehyde can undergo facile reduction by endogenous reductases to yield the alcohol 1-hydroxy-2-hydroxymethyl-3-pent-1,3-dienylbenzene. The flavin-dependent srdI counteract against the propensity of the aldehydes to be reduced under physiological conditions and is responsible for reoxidizing 1-hydroxy-2-hydroxymethyl-3-pent-1,3-dienylbenzene back to the salicylic aldehyde. This salicylic aldehyde is then selectively epoxidized by the cupin-domain-containing oxidoreductase srdB to yield the epoxide, which can be hydrolyzed stereoselectively by the hydrolase srdG to give the final product sordarial. In Neurospora crassa (strain ATCC 24698 / 74-OR23-1A / CBS 708.71 / DSM 1257 / FGSC 987), this protein is FAD-dependent monooxygenase srdH.